The sequence spans 64 residues: MTCKTCPFETCANSEYCPAGNDICYQKKWNDHREEMIERGCVANCPQMESHHTSLLCCRRDNCN.

Disulfide bonds link cysteine 3–cysteine 24, cysteine 6–cysteine 11, cysteine 17–cysteine 41, cysteine 45–cysteine 57, and cysteine 58–cysteine 63.

In terms of tissue distribution, expressed by the venom gland.

The protein resides in the secreted. Functionally, produces peripheral paralysis by blocking neuromuscular transmission at the postsynaptic site. Binds to the muscular nicotinic acetylcholine receptor (nAChR). The chain is Frontoxin IV from Micrurus frontalis (Coral snake).